The following is a 291-amino-acid chain: MSLRDKLFVTLQYLIPQHALSRLVGILARSEVPWIKTTFINMFMKRFGIDLSEAQIEDADQFPTFNAFFTRALKADARPLEASESNDIASPADGAVSQLGAIRANQVFQAKGHDYSLYDLLGGDSALASEFTNGQFATVYLSPRDYHRVHMPFTGTLRETRYVPGDLFSVNEATANGVPNLFARNERLVCIFDTEQGPMAVILVGAMIVAGIETVFSGQVTPLPKQVVTTDYLRSKPIALEKGEELGRFLLGSTVVMLFPEGKAKFAPNLKPGSQVRVRGKLGAYTNENKH.

Residues D93, H150, and S253 each act as charge relay system; for autoendoproteolytic cleavage activity in the active site. The active-site Schiff-base intermediate with substrate; via pyruvic acid; for decarboxylase activity is the S253. Residue S253 is modified to Pyruvic acid (Ser); by autocatalysis.

The protein belongs to the phosphatidylserine decarboxylase family. PSD-B subfamily. Prokaryotic type I sub-subfamily. As to quaternary structure, heterodimer of a large membrane-associated beta subunit and a small pyruvoyl-containing alpha subunit. Pyruvate is required as a cofactor. In terms of processing, is synthesized initially as an inactive proenzyme. Formation of the active enzyme involves a self-maturation process in which the active site pyruvoyl group is generated from an internal serine residue via an autocatalytic post-translational modification. Two non-identical subunits are generated from the proenzyme in this reaction, and the pyruvate is formed at the N-terminus of the alpha chain, which is derived from the carboxyl end of the proenzyme. The autoendoproteolytic cleavage occurs by a canonical serine protease mechanism, in which the side chain hydroxyl group of the serine supplies its oxygen atom to form the C-terminus of the beta chain, while the remainder of the serine residue undergoes an oxidative deamination to produce ammonia and the pyruvoyl prosthetic group on the alpha chain. During this reaction, the Ser that is part of the protease active site of the proenzyme becomes the pyruvoyl prosthetic group, which constitutes an essential element of the active site of the mature decarboxylase.

The protein resides in the cell membrane. The enzyme catalyses a 1,2-diacyl-sn-glycero-3-phospho-L-serine + H(+) = a 1,2-diacyl-sn-glycero-3-phosphoethanolamine + CO2. Its pathway is phospholipid metabolism; phosphatidylethanolamine biosynthesis; phosphatidylethanolamine from CDP-diacylglycerol: step 2/2. Functionally, catalyzes the formation of phosphatidylethanolamine (PtdEtn) from phosphatidylserine (PtdSer). This is Phosphatidylserine decarboxylase proenzyme from Alcanivorax borkumensis (strain ATCC 700651 / DSM 11573 / NCIMB 13689 / SK2).